We begin with the raw amino-acid sequence, 310 residues long: Ribosomal RNA small subunit methyltransferase H (310 aa).

S-adenosyl-L-methionine contacts are provided by residues 32–34, aspartate 51, phenylalanine 84, aspartate 102, and glutamine 109; that span reads AGH.

This sequence belongs to the methyltransferase superfamily. RsmH family.

Its subcellular location is the cytoplasm. The catalysed reaction is cytidine(1402) in 16S rRNA + S-adenosyl-L-methionine = N(4)-methylcytidine(1402) in 16S rRNA + S-adenosyl-L-homocysteine + H(+). Functionally, specifically methylates the N4 position of cytidine in position 1402 (C1402) of 16S rRNA. The polypeptide is Ribosomal RNA small subunit methyltransferase H (Campylobacter hominis (strain ATCC BAA-381 / DSM 21671 / CCUG 45161 / LMG 19568 / NCTC 13146 / CH001A)).